The following is a 444-amino-acid chain: Putative methylesterase 15, chloroplastic (444 aa).

A compositionally biased stretch (polar residues) spans 1–27; it reads MGNSLRCISQEQDPNQKKPSSVVNGNS. Disordered stretches follow at residues 1–36 and 48–91; these read MGNSLRCISQEQDPNQKKPSSVVNGNSSEKHVRRLS and PSLS…DSLI. A chloroplast-targeting transit peptide spans 1–58; sequence MGNSLRCISQEQDPNQKKPSSVVNGNSSEKHVRRLSLIPSFRRRTLLPSLSCSGSSTS. Positions 53-63 are enriched in low complexity; the sequence is SGSSTSSTSKK. The segment covering 64–80 has biased composition (basic residues); that stretch reads GGIKTKKKIRERHHQEQ. Positions 81–90 are enriched in basic and acidic residues; sequence HHHDHEKDSL. Residues 188–312 form the AB hydrolase-1 domain; sequence FVLVHGGGFG…QPDSNYDLME (125 aa). Residue D262 is the Acyl-ester intermediate of the active site. Residues D390 and H418 each act as charge relay system in the active site.

The protein belongs to the AB hydrolase superfamily. Methylesterase family.

It localises to the plastid. The protein localises to the chloroplast. Putative methylesterase. In Arabidopsis thaliana (Mouse-ear cress), this protein is Putative methylesterase 15, chloroplastic.